We begin with the raw amino-acid sequence, 584 residues long: NADPH-dependent diflavin oxidoreductase 1 (584 aa).

A Flavodoxin-like domain is found at 6 to 150 (IYILYGSETG…VFAYWCNHLY (145 aa)). FMN-binding positions include 12–17 (SETGTA), 59–62 (STTG), 97–106 (CGDTSYTRFN), and glutamate 132. The region spanning 199–436 (RGKIEATLVH…LPGFLNLSYQ (238 aa)) is the FAD-binding FR-type domain. FAD-binding positions include arginine 343, 373-376 (RQYS), and 407-410 (GICS). Residues threonine 448, 503–504 (SR), and 509–513 (KKYVQ) each bind NADP(+). Residue tryptophan 584 coordinates FAD.

The protein belongs to the NADPH-dependent diflavin oxidoreductase NDOR1 family. It in the N-terminal section; belongs to the flavodoxin family. This sequence in the C-terminal section; belongs to the flavoprotein pyridine nucleotide cytochrome reductase family. As to quaternary structure, interacts with dre2; as part of the cytosolic iron-sulfur (Fe-S) protein assembly (CIA) machinery. Requires FAD as cofactor. It depends on FMN as a cofactor.

Its subcellular location is the cytoplasm. The protein resides in the mitochondrion. The catalysed reaction is 2 oxidized [2Fe-2S]-[protein] + NADPH = 2 reduced [2Fe-2S]-[protein] + NADP(+) + H(+). Functionally, NADPH-dependent reductase which is a central component of the cytosolic iron-sulfur (Fe-S) protein assembly (CIA) machinery. Transfers electrons from NADPH via its FAD and FMN prosthetic groups to the [2Fe-2S] cluster of dre2, another key component of the CIA machinery. In turn, this reduced cluster provides electrons for assembly of cytosolic iron-sulfur cluster proteins. Positively controls H(2)O(2)-induced cell death. The chain is NADPH-dependent diflavin oxidoreductase 1 from Schizosaccharomyces pombe (strain 972 / ATCC 24843) (Fission yeast).